The primary structure comprises 232 residues: Ovalbumin-related protein X (232 aa).

Belongs to the serpin family. Ov-serpin subfamily. As to expression, expressed in egg white (at protein level).

The sequence is that of Ovalbumin-related protein X (SERPINB14C) from Gallus gallus (Chicken).